The sequence spans 376 residues: Zinc-regulated transporter 1 (376 aa).

At Met1–Arg50 the chain is on the extracellular side. Residues Ile51–Ser71 form a helical membrane-spanning segment. At Thr72–Pro80 the chain is on the cytoplasmic side. The helical transmembrane segment at Leu81–Ile101 threads the bilayer. Residues His102–Asn122 lie on the Extracellular side of the membrane. Residues Trp123 to Thr143 form a helical membrane-spanning segment. At Asp144–Gln216 the chain is on the cytoplasmic side. The segment covering Val177–Ser191 has biased composition (polar residues). The segment at Val177–Asn196 is disordered. Residues Ala217–Gly237 traverse the membrane as a helical segment. Topologically, residues Leu238–Ser242 are extracellular. The helical transmembrane segment at Val243–Leu263 threads the bilayer. The Cytoplasmic portion of the chain corresponds to Gly264–Lys278. A helical membrane pass occupies residues Arg279–Ile299. Over Gly300–Gly310 the chain is Extracellular. Residues Ser311–Tyr331 form a helical membrane-spanning segment. Topologically, residues Thr332–Glu354 are cytoplasmic. The chain crosses the membrane as a helical span at residues Leu355–Trp375. Residue Ala376 is a topological domain, extracellular.

Belongs to the ZIP transporter (TC 2.A.5) family.

It localises to the membrane. Functionally, high-affinity zinc transport protein. This chain is Zinc-regulated transporter 1 (ZRT1), found in Saccharomyces cerevisiae (strain ATCC 204508 / S288c) (Baker's yeast).